The primary structure comprises 303 residues: MATIVPTLFSFVRDTYKGRFDVATFEREVGRDFDNQEIAQAISKYEQEAKNLRNKDEIRKVIQYIDLTTLNGDDTASKVVALAKRAINPVPTDPSIHCGSVCVYPQRIADVKKFLASSKLNSNITSVAGGFPSGQYHLKSKVLEVELSVADGATEIDIVISRASALDEDWKTVHDEVLACKKACGSAHLKTILATGELKTLSNVYRASWASILAGSDFIKTSTGKESVNATLEVAYVMCTAIKRWHELTGKKVGFKPAGGIKTVDEALSYVALVKDILGDEWLNPHLFRIGASSLLDDCLKGL.

The active-site Proton donor/acceptor is the D157. K220 functions as the Schiff-base intermediate with acetaldehyde in the catalytic mechanism. Residue K256 is the Proton donor/acceptor of the active site.

Belongs to the DeoC/FbaB aldolase family. DeoC type 2 subfamily.

It catalyses the reaction 2-deoxy-D-ribose 5-phosphate = D-glyceraldehyde 3-phosphate + acetaldehyde. It participates in carbohydrate degradation; 2-deoxy-D-ribose 1-phosphate degradation; D-glyceraldehyde 3-phosphate and acetaldehyde from 2-deoxy-alpha-D-ribose 1-phosphate: step 2/2. Its function is as follows. Catalyzes a reversible aldol reaction between acetaldehyde and D-glyceraldehyde 3-phosphate to generate 2-deoxy-D-ribose 5-phosphate. This Caenorhabditis elegans protein is Putative deoxyribose-phosphate aldolase.